The primary structure comprises 642 residues: Serotransferrin (642 aa).

Transferrin-like domains lie at 1 to 280 (GIKE…SLKK) and 290 to 621 (IKWC…SLRQ). The Fe(3+) site is built by D25 and Y54. 3 disulfides stabilise this stretch: C77/C158, C121/C137, and C186/C200. The hydrogencarbonate site is built by T79, K83, A85, and G86. Y152 serves as a coordination point for Fe(3+). H208 serves as a coordination point for Fe(3+). Disulfide bonds link C293-C329 and C303-C320. D344 lines the Fe(3+) pocket. Intrachain disulfides connect C354–C633, C369–C594, C402–C480, C426–C622, C436–C450, C447–C463, and C520–C535. An N-linked (GlcNAc...) asparagine glycan is attached at N365. Y379 contacts Fe(3+). The hydrogencarbonate site is built by T404, R408, A410, and G411. Fe(3+) is bound at residue Y474. H543 contacts Fe(3+).

The protein belongs to the transferrin family. Monomer. Brain and liver; to a lesser extent in kidney and heart.

Its subcellular location is the secreted. In terms of biological role, transferrins are iron binding transport proteins which can bind two Fe(3+) ions in association with the binding of an anion, usually bicarbonate. This Gadus morhua (Atlantic cod) protein is Serotransferrin (tf).